The chain runs to 315 residues: tRNA-specific adenosine deaminase subunit tad3 (315 aa).

In terms of domain architecture, CMP/dCMP-type deaminase spans 158-299; the sequence is KRIESILEDL…AELNHRYLAY (142 aa). Positions 211, 253, and 256 each coordinate Zn(2+).

Belongs to the cytidine and deoxycytidylate deaminase family. ADAT3 subfamily. Heterodimer with Tad2.

It is found in the cytoplasm. Its subcellular location is the nucleus. Functionally, structural subunit of tRNA-specific adenosine deaminase, which deaminates adenosine-34 (the first, also called wobble position of the anticodon) to inosine in many tRNAs. Inosine-34 allows the decoding of 3 different nucleotides at the third position of mRNA codons, as inosine is able to pair with U, C, and A. The wobble inosine tRNA modification is essential for cell cycle progression in the G1/S and G2/M transitions in fission yeast. The chain is tRNA-specific adenosine deaminase subunit tad3 (tad3) from Schizosaccharomyces pombe (strain 972 / ATCC 24843) (Fission yeast).